The following is a 598-amino-acid chain: UvrABC system protein C (598 aa).

One can recognise a GIY-YIG domain in the interval 13 to 91; that stretch reads TLPGVYRMVD…IKGLKPRFNI (79 aa). Residues 200-235 enclose the UVR domain; it reads TALTEEITAQMNAAAENLDFETAAYLRDRLRMLATV.

This sequence belongs to the UvrC family. As to quaternary structure, interacts with UvrB in an incision complex.

Its subcellular location is the cytoplasm. Functionally, the UvrABC repair system catalyzes the recognition and processing of DNA lesions. UvrC both incises the 5' and 3' sides of the lesion. The N-terminal half is responsible for the 3' incision and the C-terminal half is responsible for the 5' incision. The protein is UvrABC system protein C of Thiobacillus denitrificans (strain ATCC 25259 / T1).